Reading from the N-terminus, the 425-residue chain is 2-methylserine hydroxymethyltransferase (425 aa).

Residues Leu-126 and 130-132 (GHL) contribute to the (6S)-5,6,7,8-tetrahydrofolate site. At Lys-235 the chain carries N6-(pyridoxal phosphate)lysine. Glu-251 contacts (6S)-5,6,7,8-tetrahydrofolate.

The protein belongs to the SHMT family. As to quaternary structure, homodimer. Pyridoxal 5'-phosphate is required as a cofactor.

The protein localises to the cytoplasm. It carries out the reaction (6R)-5,10-methylene-5,6,7,8-tetrahydrofolate + D-alanine + H2O = 2-methylserine + (6S)-5,6,7,8-tetrahydrofolate. It participates in one-carbon metabolism; tetrahydrofolate interconversion. In terms of biological role, catalyzes the reversible interconversion of alpha-methyl-L-serine to D-alanine with tetrahydrofolate (THF) serving as the one-carbon carrier. Cannot use alpha-methyl-D-serine, L-serine, D-serine or L-alanine. The polypeptide is 2-methylserine hydroxymethyltransferase (Ensifer sp).